The following is a 342-amino-acid chain: uncharacterized protein (342 aa).

The Nudix hydrolase domain maps to 155 to 309; it reads TYGIHINGYV…KPNCALVMVD (155 aa).

This is an uncharacterized protein from Saccharomyces cerevisiae (strain ATCC 204508 / S288c) (Baker's yeast).